The primary structure comprises 632 residues: Chaperone protein HtpG (632 aa).

Positions 1 to 339 (MTQQTMSFQA…SSDLPLNVSR (339 aa)) are a; substrate-binding. Residues 340–559 (EILQESRDVK…DNDMSGYLQR (220 aa)) are b. The segment at 560–632 (MLKAAGQNAP…TNALLLSRAA (73 aa)) is c.

This sequence belongs to the heat shock protein 90 family. In terms of assembly, homodimer.

The protein localises to the cytoplasm. Its function is as follows. Molecular chaperone. Has ATPase activity. This chain is Chaperone protein HtpG, found in Burkholderia thailandensis (strain ATCC 700388 / DSM 13276 / CCUG 48851 / CIP 106301 / E264).